A 316-amino-acid chain; its full sequence is tRNA-cytidine(32) 2-sulfurtransferase (316 aa).

Positions 52–57 (SGGKDS) match the PP-loop motif motif. Residues cysteine 127, cysteine 130, and cysteine 218 each coordinate [4Fe-4S] cluster.

The protein belongs to the TtcA family. In terms of assembly, homodimer. It depends on Mg(2+) as a cofactor. The cofactor is [4Fe-4S] cluster.

The protein resides in the cytoplasm. It catalyses the reaction cytidine(32) in tRNA + S-sulfanyl-L-cysteinyl-[cysteine desulfurase] + AH2 + ATP = 2-thiocytidine(32) in tRNA + L-cysteinyl-[cysteine desulfurase] + A + AMP + diphosphate + H(+). It functions in the pathway tRNA modification. Catalyzes the ATP-dependent 2-thiolation of cytidine in position 32 of tRNA, to form 2-thiocytidine (s(2)C32). The sulfur atoms are provided by the cysteine/cysteine desulfurase (IscS) system. The chain is tRNA-cytidine(32) 2-sulfurtransferase from Haemophilus ducreyi (strain 35000HP / ATCC 700724).